Here is a 327-residue protein sequence, read N- to C-terminus: MKKIIKVEAVEKHFGNQVIIPPLSLDIKEGEFLTILGPSGCGKTTLLRMIAGFETPTKGNLLLDDEKINDLPPYKRHMNLVFQHYALFPHMNVEKNICFGMKMQKVPAAEQKERAEEAMRLTQLLEFRNRKPAKLSGGQQQRVAIARAIVNNPRVLLLDEPLGALDFKLRKDLQRELKNLQRNLGITFIYVTHDQEEAMSMSDRIVVMNKGHIEQIGTPKEIYNKPKTLFVATFIGENNIVKNGEGYVAIRPENVKVRSVEEPILKEYHLGHIEDIEFVGNMEKLYVRDEKTSELLMAYQTAEEAAQWSIGDNVYVGWEQEDEVTLN.

The 231-residue stretch at 5–235 (IKVEAVEKHF…PKTLFVATFI (231 aa)) folds into the ABC transporter domain. An ATP-binding site is contributed by 37–44 (GPSGCGKT).

Belongs to the ABC transporter superfamily. Spermidine/putrescine importer (TC 3.A.1.11.1) family. In terms of assembly, the complex is composed of two ATP-binding proteins (PotA), two transmembrane proteins (PotB and PotC) and a solute-binding protein (PotD).

It is found in the cell membrane. The catalysed reaction is ATP + H2O + polyamine-[polyamine-binding protein]Side 1 = ADP + phosphate + polyamineSide 2 + [polyamine-binding protein]Side 1.. In terms of biological role, part of the ABC transporter complex PotABCD involved in spermidine/putrescine import. Responsible for energy coupling to the transport system. The chain is Spermidine/putrescine import ATP-binding protein PotA from Bacillus thuringiensis (strain Al Hakam).